A 289-amino-acid polypeptide reads, in one-letter code: MSRPTKADWADDEEFDDPSALPPQQITTNKDGTKTVVSYRFNDEGKKVKVTRRIKTTVVREHVNPQVAERRTWAKFGLEKGHAAGPSFDTTSVGENIVFRPSVNWKAQAAEAEKNGGEKGSIKDQLKDKKVKCRICSGEHFTARCPFKDTMAPVDEPGAGGAEGGAAAGEDAAGGLGAGGGSYVPPHLRKGAAGGGERMAGKYEKDDLATLRVTNVSELAEEQELRDLFERFGRVTRVFLARDRETQRAKGFAFISFADRSDAARACDKMDGFGYRHLILRVEFAKRAT.

The disordered stretch occupies residues methionine 1 to threonine 33. Residues alanine 209–arginine 287 form the RRM domain.

Belongs to the eIF-3 subunit G family. In terms of assembly, component of the eukaryotic translation initiation factor 3 (eIF-3) complex.

Its subcellular location is the cytoplasm. Functionally, RNA-binding component of the eukaryotic translation initiation factor 3 (eIF-3) complex, which is involved in protein synthesis of a specialized repertoire of mRNAs and, together with other initiation factors, stimulates binding of mRNA and methionyl-tRNAi to the 40S ribosome. The eIF-3 complex specifically targets and initiates translation of a subset of mRNAs involved in cell proliferation. This subunit can bind 18S rRNA. This is Eukaryotic translation initiation factor 3 subunit G (tif35) from Emericella nidulans (strain FGSC A4 / ATCC 38163 / CBS 112.46 / NRRL 194 / M139) (Aspergillus nidulans).